We begin with the raw amino-acid sequence, 706 residues long: Phenylalanine--tRNA ligase beta subunit, chloroplastic (706 aa).

The B5 domain maps to 300 to 388; the sequence is KVLKPIVLNY…RLHGFNNFLT (89 aa). Residues Asp366, Asp372, Glu375, and Glu376 each contribute to the Mg(2+) site. One can recognise an FDX-ACB domain in the interval 612-705; sequence SVYPKIVKDL…LELKVQAILR (94 aa).

This sequence belongs to the phenylalanyl-tRNA synthetase beta subunit family. Type 1 subfamily. As to quaternary structure, tetramer of two alpha and two beta subunits. Mg(2+) serves as cofactor.

It is found in the plastid. The protein localises to the chloroplast. It catalyses the reaction tRNA(Phe) + L-phenylalanine + ATP = L-phenylalanyl-tRNA(Phe) + AMP + diphosphate + H(+). This chain is Phenylalanine--tRNA ligase beta subunit, chloroplastic, found in Phaeodactylum tricornutum (strain CCAP 1055/1).